A 472-amino-acid chain; its full sequence is UDP-N-acetylmuramate--L-alanine ligase (472 aa).

Glycine 121–threonine 127 is an ATP binding site.

This sequence belongs to the MurCDEF family.

It is found in the cytoplasm. It catalyses the reaction UDP-N-acetyl-alpha-D-muramate + L-alanine + ATP = UDP-N-acetyl-alpha-D-muramoyl-L-alanine + ADP + phosphate + H(+). The protein operates within cell wall biogenesis; peptidoglycan biosynthesis. Functionally, cell wall formation. The protein is UDP-N-acetylmuramate--L-alanine ligase of Hahella chejuensis (strain KCTC 2396).